The following is a 1378-amino-acid chain: DNA-directed RNA polymerase subunit beta' (1378 aa).

The Zn(2+) site is built by Cys-69, Cys-71, Cys-84, and Cys-87. Mg(2+) contacts are provided by Asp-460, Asp-462, and Asp-464. Residues Cys-808, Cys-882, Cys-889, and Cys-892 each coordinate Zn(2+).

The protein belongs to the RNA polymerase beta' chain family. The RNAP catalytic core consists of 2 alpha, 1 beta, 1 beta' and 1 omega subunit. When a sigma factor is associated with the core the holoenzyme is formed, which can initiate transcription. It depends on Mg(2+) as a cofactor. Zn(2+) is required as a cofactor.

It catalyses the reaction RNA(n) + a ribonucleoside 5'-triphosphate = RNA(n+1) + diphosphate. Functionally, DNA-dependent RNA polymerase catalyzes the transcription of DNA into RNA using the four ribonucleoside triphosphates as substrates. This chain is DNA-directed RNA polymerase subunit beta', found in Rickettsia canadensis (strain McKiel).